The sequence spans 334 residues: Testis-specific Y-encoded protein 1 (334 aa).

Position 4 is a phosphoserine (Ser-4). Disordered stretches follow at residues 27-46 and 96-146; these read LEGE…PAGD and NEGE…AERR. Basic and acidic residues-rich tracts occupy residues 96-108 and 115-128; these read NEGE…KQEG and ELEK…DSKD.

This sequence belongs to the nucleosome assembly protein (NAP) family. Post-translationally, phosphorylated. In terms of tissue distribution, testis.

The protein resides in the cytoplasm. The protein localises to the nucleus. In terms of biological role, may be involved in sperm differentiation and proliferation. The protein is Testis-specific Y-encoded protein 1 (Tspy1) of Rattus norvegicus (Rat).